A 284-amino-acid polypeptide reads, in one-letter code: MKDSHQTIGVFVRPTHYQNPLFEELERAKEWVLKLLEDEGFESFMIDSLDGAQDERLIEKAYAFLCLGGDGTILGALRMTHSYNKPCFGVRIGNLGFLSAVELNGLKDFLQDLKQDRIKLEEHLALEGRIGKISFYAINEIVIAKKKALGVLDIKAYAGHTPFNTYKGDGLIIATPLGSTAYNLSAHGPIVHALSQSYILTPLCDFSLTQRPLVLGAEFCLNFCAHEDALVVIDGQATYDLKANQPLYIQKSPTTTKLLQKNSRDYFKVLKEKLLWGESPSKKR.

The active-site Proton acceptor is the Asp70. Residues 70–71, 139–140, Lys167, Asp169, Leu177, 180–185, and Gln236 contribute to the NAD(+) site; these read DG, NE, and TAYNLS.

It belongs to the NAD kinase family. Requires a divalent metal cation as cofactor.

The protein localises to the cytoplasm. It catalyses the reaction NAD(+) + ATP = ADP + NADP(+) + H(+). Functionally, involved in the regulation of the intracellular balance of NAD and NADP, and is a key enzyme in the biosynthesis of NADP. Catalyzes specifically the phosphorylation on 2'-hydroxyl of the adenosine moiety of NAD to yield NADP. This is NAD kinase from Helicobacter pylori (strain G27).